We begin with the raw amino-acid sequence, 257 residues long: Zinc transporter ZupT (257 aa).

A run of 3 helical transmembrane segments spans residues 5–25 (LILT…GVLG), 32–52 (LLAF…LMEM), and 61–81 (GMSP…YFGL). 2 residues coordinate Fe(2+): Asn-120 and Glu-123. Glu-123 and His-148 together coordinate Zn(2+). 4 helical membrane passes run 137–157 (LGFG…LAVA), 171–191 (ILWA…AWLI), 195–215 (MISP…MVAL), and 236–256 (GVLC…TAGI). Residues Asn-149, Glu-152, and Glu-181 each contribute to the Fe(2+) site. Glu-152 provides a ligand contact to Zn(2+).

It belongs to the ZIP transporter (TC 2.A.5) family. ZupT subfamily.

The protein resides in the cell inner membrane. The catalysed reaction is Zn(2+)(in) = Zn(2+)(out). In terms of biological role, mediates zinc uptake. May also transport other divalent cations. The protein is Zinc transporter ZupT of Escherichia coli O45:K1 (strain S88 / ExPEC).